The following is a 178-amino-acid chain: Ribosome maturation factor RimM (178 aa).

A PRC barrel domain is found at 101–178 (ADEYYWYQLE…VMRVEWDADF (78 aa)).

The protein belongs to the RimM family. In terms of assembly, binds ribosomal protein uS19.

Its subcellular location is the cytoplasm. Its function is as follows. An accessory protein needed during the final step in the assembly of 30S ribosomal subunit, possibly for assembly of the head region. Essential for efficient processing of 16S rRNA. May be needed both before and after RbfA during the maturation of 16S rRNA. It has affinity for free ribosomal 30S subunits but not for 70S ribosomes. The sequence is that of Ribosome maturation factor RimM from Pseudomonas fluorescens (strain Pf0-1).